We begin with the raw amino-acid sequence, 154 residues long: Flagellar assembly factor FliW (154 aa).

This sequence belongs to the FliW family. In terms of assembly, interacts with translational regulator CsrA and flagellin(s).

The protein localises to the cytoplasm. In terms of biological role, acts as an anti-CsrA protein, binds CsrA and prevents it from repressing translation of its target genes, one of which is flagellin. Binds to flagellin and participates in the assembly of the flagellum. This is Flagellar assembly factor FliW from Carboxydothermus hydrogenoformans (strain ATCC BAA-161 / DSM 6008 / Z-2901).